We begin with the raw amino-acid sequence, 265 residues long: Glutamate racemase (265 aa).

Residues D7–S8 and Y39–G40 each bind substrate. C70 functions as the Proton donor/acceptor in the catalytic mechanism. N71 to T72 contributes to the substrate binding site. C182 functions as the Proton donor/acceptor in the catalytic mechanism. T183–H184 provides a ligand contact to substrate.

The protein belongs to the aspartate/glutamate racemases family.

The catalysed reaction is L-glutamate = D-glutamate. The protein operates within cell wall biogenesis; peptidoglycan biosynthesis. Provides the (R)-glutamate required for cell wall biosynthesis. This is Glutamate racemase from Lachnospira eligens (strain ATCC 27750 / DSM 3376 / VPI C15-48 / C15-B4) (Eubacterium eligens).